We begin with the raw amino-acid sequence, 158 residues long: MKRNSNRKPNEICINRKAKYSFSIKETFEAGIVLLGWEVKSVRCGKINISNSYISLKNGEMYLVNSQFDPISKSNLYITYECNRIKKILLRKREITYLYSKLYKSHLTIIVLSIFFKKQWCKVKIGIAKGKTIKDKREHKKLSEWKKTQNRFVKRIRH.

The protein belongs to the SmpB family.

The protein localises to the cytoplasm. Functionally, required for rescue of stalled ribosomes mediated by trans-translation. Binds to transfer-messenger RNA (tmRNA), required for stable association of tmRNA with ribosomes. tmRNA and SmpB together mimic tRNA shape, replacing the anticodon stem-loop with SmpB. tmRNA is encoded by the ssrA gene; the 2 termini fold to resemble tRNA(Ala) and it encodes a 'tag peptide', a short internal open reading frame. During trans-translation Ala-aminoacylated tmRNA acts like a tRNA, entering the A-site of stalled ribosomes, displacing the stalled mRNA. The ribosome then switches to translate the ORF on the tmRNA; the nascent peptide is terminated with the 'tag peptide' encoded by the tmRNA and targeted for degradation. The ribosome is freed to recommence translation, which seems to be the essential function of trans-translation. This is SsrA-binding protein from Buchnera aphidicola subsp. Baizongia pistaciae (strain Bp).